Consider the following 992-residue polypeptide: P3N-PIPO polyprotein (992 aa).

The 141-residue stretch at 168–308 folds into the Peptidase S30 domain; the sequence is TSQCRKPTYV…VENMEDIQHY (141 aa). Active-site for P1 proteinase activity residues include His221, Glu230, and Ser262. Residues 361–364 carry the Involved in interaction with stylet and aphid transmission motif; sequence KLSC. The short motif at 617–619 is the Involved in virions binding and aphid transmission element; the sequence is PTK. One can recognise a Peptidase C6 domain in the interval 643 to 765; sequence MYIAKEGFCY…QSEMKFYRVG (123 aa). Active-site for helper component proteinase activity residues include Cys651 and His724.

It belongs to the potyviridae P3N-PIPO polyprotein family. In terms of assembly, interacts (via PIPO domain) with host PCaP1 protein; this interaction may help to anchor the movement complex to the plasma membrane from which the complex could move to the plasmodesmata. In terms of processing, potyviral RNA is expressed as two polyproteins which undergo post-translational proteolytic processing. Genome polyprotein is processed by NIa-pro, P1 and HC-pro proteinases resulting in the production of at least ten individual proteins. P3N-PIPO is cleaved by P1 and HC-pro proteinases resulting in the production of three individual proteins. The P1 proteinase and the HC-pro cleave only their respective C-termini autocatalytically.

Its subcellular location is the host cell junction. The protein resides in the host plasmodesma. It catalyses the reaction Hydrolyzes a Gly-|-Gly bond at its own C-terminus, commonly in the sequence -Tyr-Xaa-Val-Gly-|-Gly, in the processing of the potyviral polyprotein.. Functionally, required for aphid transmission and also has proteolytic activity. Only cleaves a Gly-Gly dipeptide at its own C-terminus. Interacts with virions and aphid stylets. Acts as a suppressor of RNA-mediated gene silencing, also known as post-transcriptional gene silencing (PTGS), a mechanism of plant viral defense that limits the accumulation of viral RNAs. May have RNA-binding activity. Allows efficient cell to cell propagation, by bypassing the host cell wall barrier. Transports viral genome to neighboring plant cells directly through plasmosdesmata, without any budding. The chain is P3N-PIPO polyprotein from Glycine max (Soybean).